The sequence spans 1901 residues: Protein TIC 214 (1901 aa).

Transmembrane regions (helical) follow at residues 18 to 38 (IINS…FSIG), 64 to 84 (FITG…HLAL), 87 to 107 (PHTI…WNNH), 124 to 144 (LSIQ…HFIL), 172 to 192 (VGWL…LVWI), and 221 to 241 (IFSI…PSPI). Disordered stretches follow at residues 248–299 (EASK…EERW), 797–817 (REEQ…ENKR), and 1591–1618 (IQEA…LGPV). Over residues 256 to 268 (VESEEERDVEIET) the composition is skewed to acidic residues. Positions 1591-1611 (IQEAKEPASQGEKERGSDIEN) are enriched in basic and acidic residues.

This sequence belongs to the TIC214 family. In terms of assembly, part of the Tic complex.

It is found in the plastid. It localises to the chloroplast inner membrane. Its function is as follows. Involved in protein precursor import into chloroplasts. May be part of an intermediate translocation complex acting as a protein-conducting channel at the inner envelope. The chain is Protein TIC 214 from Nicotiana sylvestris (Wood tobacco).